The primary structure comprises 259 residues: Cytosolic Fe-S cluster assembly factor Nubp2 homolog (259 aa).

14 to 21 (GKGGVGKS) contacts ATP. Cys-188 and Cys-191 together coordinate [4Fe-4S] cluster.

This sequence belongs to the Mrp/NBP35 ATP-binding proteins family. NUBP2/CFD1 subfamily. In terms of assembly, heterotetramer of 2 Nubp1 and 2 Nubp2 chains. [4Fe-4S] cluster is required as a cofactor.

The protein resides in the cytoplasm. Its function is as follows. Component of the cytosolic iron-sulfur (Fe/S) protein assembly (CIA) machinery. Required for maturation of extramitochondrial Fe-S proteins. The Nubp1-Nubp2 heterotetramer forms a Fe-S scaffold complex, mediating the de novo assembly of an Fe-S cluster and its transfer to target apoproteins. This Aedes aegypti (Yellowfever mosquito) protein is Cytosolic Fe-S cluster assembly factor Nubp2 homolog.